The following is a 131-amino-acid chain: C-C motif chemokine 21 (131 aa).

The first 23 residues, 1–23 (MAQSLALSLLILVLAFGIPGTQG), serve as a signal peptide directing secretion. Disulfide bonds link C31–C57, C32–C75, and C103–C119. A disordered region spans residues 89-131 (HLDKTPTPRKPVQGCRKDRGVPKNGKKGKGCKRTEQSQTPKGP).

This sequence belongs to the intercrine beta (chemokine CC) family. As to quaternary structure, monomer. Binds to CCR7. Interacts with PDPN; relocalizes PDPN to the basolateral membrane. Interacts with TNFAIP6 (via Link domain). Interacts with GPR174.

It is found in the secreted. Functionally, inhibits hemopoiesis and stimulates chemotaxis. Chemotactic in vitro for thymocytes and activated T-cells, but not for B-cells, macrophages, or neutrophils. Shows preferential activity towards naive T-cells. May play a role in mediating homing of lymphocytes to secondary lymphoid organs. Binds to atypical chemokine receptor ACKR4 and mediates the recruitment of beta-arrestin (ARRB1/2) to ACKR4. In Macaca mulatta (Rhesus macaque), this protein is C-C motif chemokine 21 (CCL21).